The chain runs to 65 residues: Large ribosomal subunit protein uL29 (65 aa).

It belongs to the universal ribosomal protein uL29 family.

This is Large ribosomal subunit protein uL29 from Lactobacillus acidophilus (strain ATCC 700396 / NCK56 / N2 / NCFM).